Reading from the N-terminus, the 283-residue chain is 2-dehydro-3-deoxyphosphooctonate aldolase (283 aa).

This sequence belongs to the KdsA family.

The protein localises to the cytoplasm. It catalyses the reaction D-arabinose 5-phosphate + phosphoenolpyruvate + H2O = 3-deoxy-alpha-D-manno-2-octulosonate-8-phosphate + phosphate. The protein operates within carbohydrate biosynthesis; 3-deoxy-D-manno-octulosonate biosynthesis; 3-deoxy-D-manno-octulosonate from D-ribulose 5-phosphate: step 2/3. It functions in the pathway bacterial outer membrane biogenesis; lipopolysaccharide biosynthesis. This chain is 2-dehydro-3-deoxyphosphooctonate aldolase, found in Prochlorococcus marinus (strain MIT 9313).